A 483-amino-acid polypeptide reads, in one-letter code: MEEAATLQSLSISSSSPFPNNSSPVVTAANTISTSESDMFRAPVNRMMRTLDRSFFKKTVPLSAATIFDKQSIGSIKSELLQSQDLLLANRIIPVRAAREGPLENVTDHWYGRKDGKQDGRKCLLLREGIKADDVTTWSPTIQKLVEAKSVEVRPFNLLLDYDYFTYTHFNLREQYLPYKYLLGEILRDKHPQARTVINKTDDVGSHSEFRTFSYEVLAGEDDMLVTVHEQDCEYSFDYSKVYWNTRLATEHERMVSRFKKGEAVCDVMAGVGPFSIPAGKKQVFVWANDLNPYGYECLERGAAKNKVREFVKAHNMNGRDFIRFATERLYQGNPRTVVHRTKVPKAERENSPIRQRKPKAFDTEYLTCPRTFDHFVMNLPATAIEFLDAFRGLYAGMQELFEPYTDRKLPLIHVYCFSTNSEDEALERKDICERISERLGFKITPEDEGRELEIRSVRLVSPTKKMFCASFRLPAEVAFKKA.

Residues 1 to 24 (MEEAATLQSLSISSSSPFPNNSSP) are disordered. Residues 9 to 24 (SLSISSSSPFPNNSSP) are compositionally biased toward low complexity. Residues His252, 290 to 291 (DL), and Asn379 contribute to the S-adenosyl-L-methionine site.

It belongs to the class I-like SAM-binding methyltransferase superfamily. TRM5/TYW2 family. Monomer.

The protein resides in the mitochondrion matrix. It localises to the nucleus. Its subcellular location is the cytoplasm. The enzyme catalyses guanosine(37) in tRNA + S-adenosyl-L-methionine = N(1)-methylguanosine(37) in tRNA + S-adenosyl-L-homocysteine + H(+). Functionally, specifically methylates the N1 position of guanosine-37 in various cytoplasmic and mitochondrial tRNAs. Methylation is not dependent on the nature of the nucleoside 5' of the target nucleoside. This is the first step in the biosynthesis of wybutosine (yW), a modified base adjacent to the anticodon of tRNAs and required for accurate decoding. This is tRNA (guanine(37)-N(1))-methyltransferase from Ajellomyces capsulatus (strain G186AR / H82 / ATCC MYA-2454 / RMSCC 2432) (Darling's disease fungus).